We begin with the raw amino-acid sequence, 396 residues long: Nucleolar protein 12 (396 aa).

The tract at residues 43 to 104 is disordered; the sequence is TDKDADGDEK…GKESKKSTKE (62 aa). Residues 47–58 are compositionally biased toward acidic residues; it reads ADGDEKMEDAAS. A compositionally biased stretch (basic residues) spans 64–73; it reads KKPSKKKLAK. The span at 87–104 shows a compositional bias: basic and acidic residues; it reads EPEKLVEEGKESKKSTKE. 2 consecutive RRM domains span residues 112–220 and 228–312; these read RTIF…SITH and RSVF…RCKN. The segment at 361 to 396 is disordered; that stretch reads TKDDSKPVLKKGKKERSKTGRVTKRSQAFKKSQQKK. A compositionally biased stretch (basic residues) spans 368 to 396; sequence VLKKGKKERSKTGRVTKRSQAFKKSQQKK.

The protein belongs to the RRM RBM34 family.

Its subcellular location is the nucleus. It localises to the nucleolus. In terms of biological role, involved in pre-25S rRNA processing. The chain is Nucleolar protein 12 (NOP12) from Candida glabrata (strain ATCC 2001 / BCRC 20586 / JCM 3761 / NBRC 0622 / NRRL Y-65 / CBS 138) (Yeast).